The sequence spans 320 residues: Acetyl-coenzyme A carboxylase carboxyl transferase subunit alpha (320 aa).

Residues alanine 33–alanine 294 form the CoA carboxyltransferase C-terminal domain.

It belongs to the AccA family. Acetyl-CoA carboxylase is a heterohexamer composed of biotin carboxyl carrier protein (AccB), biotin carboxylase (AccC) and two subunits each of ACCase subunit alpha (AccA) and ACCase subunit beta (AccD).

Its subcellular location is the cytoplasm. It catalyses the reaction N(6)-carboxybiotinyl-L-lysyl-[protein] + acetyl-CoA = N(6)-biotinyl-L-lysyl-[protein] + malonyl-CoA. It functions in the pathway lipid metabolism; malonyl-CoA biosynthesis; malonyl-CoA from acetyl-CoA: step 1/1. Functionally, component of the acetyl coenzyme A carboxylase (ACC) complex. First, biotin carboxylase catalyzes the carboxylation of biotin on its carrier protein (BCCP) and then the CO(2) group is transferred by the carboxyltransferase to acetyl-CoA to form malonyl-CoA. The polypeptide is Acetyl-coenzyme A carboxylase carboxyl transferase subunit alpha (Phenylobacterium zucineum (strain HLK1)).